The primary structure comprises 173 residues: dCTP deaminase, dUMP-forming (173 aa).

DCTP-binding positions include Arg93 to Arg98, Asp111, Thr119 to Glu121, and Gln138. The active-site Proton donor/acceptor is Glu121.

Belongs to the dCTP deaminase family. In terms of assembly, homotrimer.

It carries out the reaction dCTP + 2 H2O = dUMP + NH4(+) + diphosphate. Its pathway is pyrimidine metabolism; dUMP biosynthesis; dUMP from dCTP: step 1/1. Its function is as follows. Bifunctional enzyme that catalyzes both the deamination of dCTP to dUTP and the hydrolysis of dUTP to dUMP without releasing the toxic dUTP intermediate. The chain is dCTP deaminase, dUMP-forming from Leptospira borgpetersenii serovar Hardjo-bovis (strain JB197).